We begin with the raw amino-acid sequence, 458 residues long: UPF0210 protein MJ1665 (458 aa).

It belongs to the UPF0210 family.

In Methanocaldococcus jannaschii (strain ATCC 43067 / DSM 2661 / JAL-1 / JCM 10045 / NBRC 100440) (Methanococcus jannaschii), this protein is UPF0210 protein MJ1665.